The primary structure comprises 339 residues: Biotin synthase (339 aa).

A Radical SAM core domain is found at 55-282 (NAVQLSTLLS…KAVVRLSAGR (228 aa)). The [4Fe-4S] cluster site is built by Cys70, Cys74, and Cys77. [2Fe-2S] cluster contacts are provided by Cys114, Cys145, Cys205, and Arg277.

Belongs to the radical SAM superfamily. Biotin synthase family. As to quaternary structure, homodimer. [4Fe-4S] cluster serves as cofactor. [2Fe-2S] cluster is required as a cofactor.

The enzyme catalyses (4R,5S)-dethiobiotin + (sulfur carrier)-SH + 2 reduced [2Fe-2S]-[ferredoxin] + 2 S-adenosyl-L-methionine = (sulfur carrier)-H + biotin + 2 5'-deoxyadenosine + 2 L-methionine + 2 oxidized [2Fe-2S]-[ferredoxin]. The protein operates within cofactor biosynthesis; biotin biosynthesis; biotin from 7,8-diaminononanoate: step 2/2. Catalyzes the conversion of dethiobiotin (DTB) to biotin by the insertion of a sulfur atom into dethiobiotin via a radical-based mechanism. The chain is Biotin synthase from Burkholderia ambifaria (strain ATCC BAA-244 / DSM 16087 / CCUG 44356 / LMG 19182 / AMMD) (Burkholderia cepacia (strain AMMD)).